The chain runs to 133 residues: Global transcriptional regulator Spx (133 aa).

Cysteines 10 and 13 form a disulfide.

The protein belongs to the ArsC family. Spx subfamily. As to quaternary structure, interacts with the C-terminal domain of the alpha subunit of the RNAP.

The protein resides in the cytoplasm. In terms of biological role, global transcriptional regulator that plays a key role in stress response and exerts either positive or negative regulation of genes. Acts by interacting with the C-terminal domain of the alpha subunit of the RNA polymerase (RNAP). This interaction can enhance binding of RNAP to the promoter region of target genes and stimulate their transcription, or block interaction of RNAP with activator. This Streptococcus pneumoniae serotype 4 (strain ATCC BAA-334 / TIGR4) protein is Global transcriptional regulator Spx.